The following is a 359-amino-acid chain: Membrane-bound lytic murein transglycosylase C (359 aa).

A signal peptide spans 1-16 (MKKYLALALIAPLLIS). Cys17 is lipidated: N-palmitoyl cysteine. A lipid anchor (S-diacylglycerol cysteine) is attached at Cys17.

This sequence belongs to the transglycosylase Slt family.

It is found in the cell outer membrane. The catalysed reaction is Exolytic cleavage of the (1-&gt;4)-beta-glycosidic linkage between N-acetylmuramic acid (MurNAc) and N-acetylglucosamine (GlcNAc) residues in peptidoglycan, from either the reducing or the non-reducing ends of the peptidoglycan chains, with concomitant formation of a 1,6-anhydrobond in the MurNAc residue.. Murein-degrading enzyme. May play a role in recycling of muropeptides during cell elongation and/or cell division. This chain is Membrane-bound lytic murein transglycosylase C, found in Escherichia fergusonii (strain ATCC 35469 / DSM 13698 / CCUG 18766 / IAM 14443 / JCM 21226 / LMG 7866 / NBRC 102419 / NCTC 12128 / CDC 0568-73).